Consider the following 213-residue polypeptide: Urease accessory protein UreE (213 aa).

Positions 170 to 213 (EHHGHSHSHSHSHSHDHDHDHDHDHDHDHQHGPSCSHGHHHGHR) are disordered. The segment covering 182–200 (HSHDHDHDHDHDHDHDHQH) has biased composition (basic and acidic residues).

This sequence belongs to the UreE family.

It localises to the cytoplasm. Functionally, involved in urease metallocenter assembly. Binds nickel. Probably functions as a nickel donor during metallocenter assembly. The chain is Urease accessory protein UreE from Burkholderia mallei (strain NCTC 10229).